We begin with the raw amino-acid sequence, 300 residues long: tRNA dimethylallyltransferase (300 aa).

9–16 (GTTASGKS) contributes to the ATP binding site. 11-16 (TASGKS) lines the substrate pocket. The interaction with substrate tRNA stretch occupies residues 34–37 (DSLC).

This sequence belongs to the IPP transferase family. Monomer. It depends on Mg(2+) as a cofactor.

It carries out the reaction adenosine(37) in tRNA + dimethylallyl diphosphate = N(6)-dimethylallyladenosine(37) in tRNA + diphosphate. Functionally, catalyzes the transfer of a dimethylallyl group onto the adenine at position 37 in tRNAs that read codons beginning with uridine, leading to the formation of N6-(dimethylallyl)adenosine (i(6)A). The sequence is that of tRNA dimethylallyltransferase from Campylobacter fetus subsp. fetus (strain 82-40).